The chain runs to 405 residues: MLNLQPYENPQYFVYLIIALLPVIIGMFKGFRMHWYESIFSLVFLVLIFDADKWPQGKALLGYVVFNLLLVYAYFKYRTREGSKNSTAVFYLSVALGIAHVAVVKFTPLFQHHGSILGFLGISYLTFRVVGTIMEIRDGSIKDLNMWKFIQFLLFFPTISSGPIDRYRRFVKDYDRVPDPEHYAQLVTKAIHYLMLGFLYKFILGYIFGTLWLPSVEHMAMASRGGAFLGLSWPVVGVMYAYSGYLFFDFAGYSLFAVAISYLMGIETPMNFNKPWSHITSRLLNRWQLSLSFWFRDYIYMRFVFFMMKHKWIKSRVWTAFVGYLVLFLIMGIWHGETWYYIVYGLFHAMLINLTDAWLRFKKKHKDFFPHNRATHYPSPFSMTANAVCFSFLIFSGFLDKLWFH.

The Extracellular segment spans residues 1 to 9 (MLNLQPYEN). The chain crosses the membrane as a helical span at residues 10 to 29 (PQYFVYLIIALLPVIIGMFK). Residues 30-33 (GFRM) are Cytoplasmic-facing. A helical membrane pass occupies residues 34 to 49 (HWYESIFSLVFLVLIF). Over 50-53 (DADK) the chain is Extracellular. A helical membrane pass occupies residues 54 to 80 (WPQGKALLGYVVFNLLLVYAYFKYRTR). Over 81–86 (EGSKNS) the chain is Cytoplasmic. Residues 87–111 (TAVFYLSVALGIAHVAVVKFTPLFQ) form a helical membrane-spanning segment. Over 112–121 (HHGSILGFLG) the chain is Extracellular. Residues 122–138 (ISYLTFRVVGTIMEIRD) form a helical membrane-spanning segment. Residues 139–145 (GSIKDLN) lie on the Cytoplasmic side of the membrane. Residues 146-175 (MWKFIQFLLFFPTISSGPIDRYRRFVKDYD) lie within the membrane without spanning it. At 176 to 179 (RVPD) the chain is on the cytoplasmic side. Residues 180 to 223 (PEHYAQLVTKAIHYLMLGFLYKFILGYIFGTLWLPSVEHMAMAS) form a helical membrane-spanning segment. The Extracellular portion of the chain corresponds to 224-232 (RGGAFLGLS). The chain crosses the membrane as a helical span at residues 233–264 (WPVVGVMYAYSGYLFFDFAGYSLFAVAISYLM). The Cytoplasmic segment spans residues 265-274 (GIETPMNFNK). Residues 275–310 (PWSHITSRLLNRWQLSLSFWFRDYIYMRFVFFMMKH) lie within the membrane without spanning it. At 311–315 (KWIKS) the chain is on the cytoplasmic side. Residues 316–335 (RVWTAFVGYLVLFLIMGIWH) traverse the membrane as a helical segment. Residue histidine 335 is part of the active site. The Extracellular segment spans residues 336 to 338 (GET). A helical membrane pass occupies residues 339 to 372 (WYYIVYGLFHAMLINLTDAWLRFKKKHKDFFPHN). At 373-378 (RATHYP) the chain is on the cytoplasmic side. The helical transmembrane segment at 379 to 399 (SPFSMTANAVCFSFLIFSGFL) threads the bilayer. Over 400–405 (DKLWFH) the chain is Extracellular.

It belongs to the membrane-bound acyltransferase family.

It localises to the cell membrane. It functions in the pathway cell wall biogenesis; lipoteichoic acid biosynthesis. Functionally, O-acyltransferase that catalyzes D-alanylation of both teichoic acid and lipoteichoic acid (LTA). D-alanylation of LTA plays an important role in modulating the properties of the cell wall in Gram-positive bacteria, influencing the net charge of the cell wall. Catalyzes D-alanylation from DltC carrier protein. The protein is Teichoic acid D-alanyltransferase of Lacticaseibacillus rhamnosus (Lactobacillus rhamnosus).